A 46-amino-acid chain; its full sequence is Large ribosomal subunit protein bL34 (46 aa).

This sequence belongs to the bacterial ribosomal protein bL34 family.

This chain is Large ribosomal subunit protein bL34, found in Trichodesmium erythraeum (strain IMS101).